Reading from the N-terminus, the 87-residue chain is RNA-binding protein Hfq (87 aa).

One can recognise a Sm domain in the interval 9–68 (DPFLNALRRERIPVSIYLVNGIKLQGQIESFDQFVILLKNTVNQMVYKHAISTVVPARPV). The segment at 65-87 (ARPVSHHSGDRPASDRPAEKSEE) is disordered. Basic and acidic residues predominate over residues 71–87 (HSGDRPASDRPAEKSEE).

It belongs to the Hfq family.

Functionally, RNA chaperone that binds small regulatory RNA (sRNAs) and mRNAs to facilitate mRNA translational regulation in response to envelope stress, environmental stress and changes in metabolite concentrations. Also binds with high specificity to tRNAs. Essential for virulence in the suckling mouse model of cholera pathogenesis. In Vibrio cholerae serotype O1 (strain ATCC 39315 / El Tor Inaba N16961), this protein is RNA-binding protein Hfq.